The primary structure comprises 203 residues: Small ribosomal subunit protein uS4 (203 aa).

An S4 RNA-binding domain is found at 93–156; the sequence is QRLDNVVFRL…MKVPAILEAV (64 aa).

This sequence belongs to the universal ribosomal protein uS4 family. Part of the 30S ribosomal subunit. Contacts protein S5. The interaction surface between S4 and S5 is involved in control of translational fidelity.

Functionally, one of the primary rRNA binding proteins, it binds directly to 16S rRNA where it nucleates assembly of the body of the 30S subunit. Its function is as follows. With S5 and S12 plays an important role in translational accuracy. This chain is Small ribosomal subunit protein uS4, found in Lactococcus lactis subsp. lactis (strain IL1403) (Streptococcus lactis).